The primary structure comprises 346 residues: Probable dolichyl-diphosphooligosaccharide--protein glycosyltransferase subunit 3B (346 aa).

The N-terminal stretch at methionine 1 to alanine 22 is a signal peptide. The Lumenal portion of the chain corresponds to alanine 23–leucine 189. N-linked (GlcNAc...) asparagine glycosylation occurs at asparagine 108. Residues leucine 190–isoleucine 210 traverse the membrane as a helical segment. Residues lysine 211–leucine 225 lie on the Cytoplasmic side of the membrane. Residues tryptophan 226–isoleucine 246 form a helical membrane-spanning segment. Residues arginine 247 to glycine 277 lie on the Lumenal side of the membrane. Residues phenylalanine 278–leucine 298 form a helical membrane-spanning segment. Topologically, residues valine 299 to arginine 308 are cytoplasmic. Residues leucine 309 to aspartate 329 form a helical membrane-spanning segment. Over asparagine 330–arginine 346 the chain is Lumenal.

This sequence belongs to the OST3/OST6 family. As to quaternary structure, component of the oligosaccharyltransferase (OST) complex.

The protein resides in the endoplasmic reticulum membrane. Its function is as follows. Subunit of the oligosaccharyl transferase (OST) complex that catalyzes the initial transfer of a defined glycan (Glc(3)Man(9)GlcNAc(2) in eukaryotes) from the lipid carrier dolichol-pyrophosphate to an asparagine residue within an Asn-X-Ser/Thr consensus motif in nascent polypeptide chains, the first step in protein N-glycosylation. N-glycosylation occurs cotranslationally and the complex associates with the Sec61 complex at the channel-forming translocon complex that mediates protein translocation across the endoplasmic reticulum (ER). All subunits are required for a maximal enzyme activity. This chain is Probable dolichyl-diphosphooligosaccharide--protein glycosyltransferase subunit 3B (OST3B), found in Arabidopsis thaliana (Mouse-ear cress).